A 434-amino-acid polypeptide reads, in one-letter code: Gamma-glutamyl phosphate reductase (434 aa).

The protein belongs to the gamma-glutamyl phosphate reductase family.

The protein localises to the cytoplasm. It catalyses the reaction L-glutamate 5-semialdehyde + phosphate + NADP(+) = L-glutamyl 5-phosphate + NADPH + H(+). The protein operates within amino-acid biosynthesis; L-proline biosynthesis; L-glutamate 5-semialdehyde from L-glutamate: step 2/2. Its function is as follows. Catalyzes the NADPH-dependent reduction of L-glutamate 5-phosphate into L-glutamate 5-semialdehyde and phosphate. The product spontaneously undergoes cyclization to form 1-pyrroline-5-carboxylate. The chain is Gamma-glutamyl phosphate reductase from Pelotomaculum thermopropionicum (strain DSM 13744 / JCM 10971 / SI).